A 292-amino-acid polypeptide reads, in one-letter code: tRNA pseudouridine synthase B (292 aa).

Catalysis depends on Asp40, which acts as the Nucleophile.

This sequence belongs to the pseudouridine synthase TruB family. Type 1 subfamily.

It carries out the reaction uridine(55) in tRNA = pseudouridine(55) in tRNA. Responsible for synthesis of pseudouridine from uracil-55 in the psi GC loop of transfer RNAs. The chain is tRNA pseudouridine synthase B from Mycoplasma mycoides subsp. mycoides SC (strain CCUG 32753 / NCTC 10114 / PG1).